A 172-amino-acid polypeptide reads, in one-letter code: Bifunctional protein PyrR (172 aa).

Positions 90-102 match the PRPP-binding motif; sequence LVLVDDVLMSGRT.

Belongs to the purine/pyrimidine phosphoribosyltransferase family. PyrR subfamily.

It catalyses the reaction UMP + diphosphate = 5-phospho-alpha-D-ribose 1-diphosphate + uracil. Functionally, regulates the transcription of the pyrimidine nucleotide (pyr) operon in response to exogenous pyrimidines. In terms of biological role, also displays a weak uracil phosphoribosyltransferase activity which is not physiologically significant. The sequence is that of Bifunctional protein PyrR from Pseudomonas putida (strain GB-1).